We begin with the raw amino-acid sequence, 333 residues long: Chitinase-like protein 2 (333 aa).

A signal peptide spans 1–27 (MVSKPLFSLLLLTVALVVFQTGTLVNA). A disulfide bridge links C50 with C56. A glycan (N-linked (GlcNAc...) asparagine) is linked at N65. C165 and C175 form a disulfide bridge. N-linked (GlcNAc...) asparagine glycans are attached at residues N216 and N252. The cysteines at positions 275 and 313 are disulfide-linked. Residues 307-333 (PHEKLSCADQEPFSSSSSAPPSSGSSS) are disordered. Over residues 320 to 333 (SSSSSAPPSSGSSS) the composition is skewed to low complexity.

It belongs to the glycosyl hydrolase 19 family. In terms of tissue distribution, mostly expressed in stems, especially in xylem and interfascicular fibers.

It localises to the secreted. No chitinase activity. Required for proper cell wall biosynthesis in etiolated seedlings. Prevents lignin accumulation in hypocotyls. The protein is Chitinase-like protein 2 (CTL2) of Arabidopsis thaliana (Mouse-ear cress).